A 329-amino-acid polypeptide reads, in one-letter code: tRNA pseudouridine synthase B (329 aa).

Substrate is bound at residue His43. Catalysis depends on Asp48, which acts as the Nucleophile. Substrate contacts are provided by Tyr76, Tyr179, and Leu200.

The protein belongs to the pseudouridine synthase TruB family. Type 1 subfamily.

It carries out the reaction uridine(55) in tRNA = pseudouridine(55) in tRNA. Functionally, responsible for synthesis of pseudouridine from uracil-55 in the psi GC loop of transfer RNAs. This chain is tRNA pseudouridine synthase B, found in Yersinia enterocolitica serotype O:8 / biotype 1B (strain NCTC 13174 / 8081).